Consider the following 322-residue polypeptide: Interferon regulatory factor 1 (322 aa).

Positions 5 to 113 form a DNA-binding region, IRF tryptophan pentad repeat; it reads RMRMRPWLEM…SAVRVYRMLP (109 aa). Lys-78 is modified (N6-acetyllysine). The disordered stretch occupies residues 92–164; the sequence is EEVKDQSRNK…STLPDDHSNY (73 aa). The segment covering 146-157 has biased composition (polar residues); sequence DTFSDGLSSSTL. Glycyl lysine isopeptide (Lys-Gly) (interchain with G-Cter in SUMO) cross-links involve residues Lys-276 and Lys-296.

Belongs to the IRF family. As to quaternary structure, monomer. Homodimer. Interacts with EP300. Interacts with MYD88. Interacts with PIAS3. Interacts with SPOP. Post-translationally, phosphorylated by CK2 and this positively regulates its activity. In terms of processing, sumoylation represses the transcriptional activity and displays enhanced resistance to protein degradation. Sumoylated by UBE2I/UBC9 and SUMO1. Inactivates the tumor suppressor activity. Elevated levels in tumor cells. Major site is Lys-276. Sumoylation is enhanced by PIAS3. Desumoylated by SENP1 in tumor cells and appears to compete with ubiquitination on C-terminal sites. Ubiquitinated in a SPOP-depedent manner. Appears to compete with sumoylation on C-terminal sites.

The protein resides in the nucleus. It is found in the cytoplasm. Its activity is regulated as follows. Activated by MYD88. Its function is as follows. Transcriptional regulator which displays a remarkable functional diversity in the regulation of cellular responses. Regulates transcription of IFN and IFN-inducible genes, host response to viral and bacterial infections, regulation of many genes expressed during hematopoiesis, inflammation, immune responses and cell proliferation and differentiation, regulation of the cell cycle and induction of growth arrest and programmed cell death following DNA damage. Stimulates both innate and acquired immune responses through the activation of specific target genes and can act as a transcriptional activator and repressor regulating target genes by binding to an interferon-stimulated response element (ISRE) in their promoters. Has an essentail role in IFNG-dependent immunity to mycobacteria. Binds to a consensus sequence in gene promoters. Its target genes for transcriptional activation activity include: genes involved in anti-viral response, such as IFN-alpha/beta, RIGI, TNFSF10/TRAIL, ZBP1, OAS1/2, PIAS1/GBP, EIF2AK2/PKR and RSAD2/viperin; antibacterial response, such as GBP2, GBP5 and NOS2/INOS; anti-proliferative response, such as p53/TP53, LOX and CDKN1A; apoptosis, such as BBC3/PUMA, CASP1, CASP7 and CASP8; immune response, such as IL7, IL12A/B and IL15, PTGS2/COX2 and CYBB; DNA damage responses and DNA repair, such as POLQ/POLH; MHC class I expression, such as TAP1, PSMB9/LMP2, PSME1/PA28A, PSME2/PA28B and B2M and MHC class II expression, such as CIITA; metabolic enzymes, such as ACOD1/IRG1. Represses genes involved in anti-proliferative response, such as BIRC5/survivin, CCNB1, CCNE1, CDK1, CDK2 and CDK4 and in immune response, such as FOXP3, IL4, ANXA2 and TLR4. Stimulates p53/TP53-dependent transcription through enhanced recruitment of EP300 leading to increased acetylation of p53/TP53. Plays an important role in immune response directly affecting NK maturation and activity, macrophage production of IL12, Th1 development and maturation of CD8+ T-cells. Also implicated in the differentiation and maturation of dendritic cells and in the suppression of regulatory T (Treg) cells development. Acts as a tumor suppressor and plays a role not only in antagonism of tumor cell growth but also in stimulating an immune response against tumor cells. This chain is Interferon regulatory factor 1 (IRF1), found in Bos taurus (Bovine).